Consider the following 408-residue polypeptide: Probable E3 ubiquitin-protein ligase makorin-1 (408 aa).

2 C3H1-type zinc fingers span residues 34-61 and 63-90; these read WTRH…HDLA and SRSA…HNKP. Disordered stretches follow at residues 90–114 and 154–173; these read PLQE…SGNI and EAYT…PADP. The span at 162–173 shows a compositional bias: basic and acidic residues; it reads KPDEGREEPADP. A C3H1-type 3 zinc finger spans residues 174 to 201; it reads ELKKQLCPYAAMGECRYGENCVYLHGDP. The segment at 202–229 is makorin-type Cys-His; the sequence is CDMCGLQVLHPVDTCQRSQHIKSCIEAH. The RING-type zinc finger occupies 247–301; sequence CGICMEVVYEKTNPSERRFGILSNCSHSYCLKCIRKWRSAKQFESKIIKSCPECR. The C3H1-type 4 zinc-finger motif lies at 330 to 359; it reads AMSSKSCRYFDEGRGTCPFGGNCFYRHAYP. Positions 363–408 are disordered; that stretch reads IEEPQPRQKSGMSSRYRIPSPSAGIDFGSLTSERAETRLRTRKTKL.

The enzyme catalyses S-ubiquitinyl-[E2 ubiquitin-conjugating enzyme]-L-cysteine + [acceptor protein]-L-lysine = [E2 ubiquitin-conjugating enzyme]-L-cysteine + N(6)-ubiquitinyl-[acceptor protein]-L-lysine.. It participates in protein modification; protein ubiquitination. In terms of biological role, E3 ubiquitin ligase catalyzing the covalent attachment of ubiquitin moieties onto substrate proteins. This Xenopus laevis (African clawed frog) protein is Probable E3 ubiquitin-protein ligase makorin-1 (mkrn1).